We begin with the raw amino-acid sequence, 466 residues long: UDP-N-acetylmuramoylalanine--D-glutamate ligase (466 aa).

G139–G145 contributes to the ATP binding site.

This sequence belongs to the MurCDEF family.

The protein resides in the cytoplasm. The enzyme catalyses UDP-N-acetyl-alpha-D-muramoyl-L-alanine + D-glutamate + ATP = UDP-N-acetyl-alpha-D-muramoyl-L-alanyl-D-glutamate + ADP + phosphate + H(+). Its pathway is cell wall biogenesis; peptidoglycan biosynthesis. In terms of biological role, cell wall formation. Catalyzes the addition of glutamate to the nucleotide precursor UDP-N-acetylmuramoyl-L-alanine (UMA). The chain is UDP-N-acetylmuramoylalanine--D-glutamate ligase from Deinococcus geothermalis (strain DSM 11300 / CIP 105573 / AG-3a).